The primary structure comprises 145 residues: UPF0260 protein VV2402 (145 aa).

It belongs to the UPF0260 family.

The chain is UPF0260 protein VV2402 from Vibrio vulnificus (strain YJ016).